Consider the following 414-residue polypeptide: Tryptophan synthase beta chain (414 aa).

Lys-108 is subject to N6-(pyridoxal phosphate)lysine.

This sequence belongs to the TrpB family. Tetramer of two alpha and two beta chains. Pyridoxal 5'-phosphate is required as a cofactor.

It catalyses the reaction (1S,2R)-1-C-(indol-3-yl)glycerol 3-phosphate + L-serine = D-glyceraldehyde 3-phosphate + L-tryptophan + H2O. Its pathway is amino-acid biosynthesis; L-tryptophan biosynthesis; L-tryptophan from chorismate: step 5/5. Functionally, the beta subunit is responsible for the synthesis of L-tryptophan from indole and L-serine. This is Tryptophan synthase beta chain from Beijerinckia indica subsp. indica (strain ATCC 9039 / DSM 1715 / NCIMB 8712).